A 280-amino-acid polypeptide reads, in one-letter code: 3-methyl-2-oxobutanoate hydroxymethyltransferase (280 aa).

Mg(2+) contacts are provided by aspartate 49 and aspartate 88. 3-methyl-2-oxobutanoate is bound by residues 49-50 (DS), aspartate 88, and lysine 118. Glutamate 120 lines the Mg(2+) pocket. The active-site Proton acceptor is the glutamate 187.

It belongs to the PanB family. In terms of assembly, homodecamer; pentamer of dimers. Mg(2+) serves as cofactor.

The protein resides in the cytoplasm. The catalysed reaction is 3-methyl-2-oxobutanoate + (6R)-5,10-methylene-5,6,7,8-tetrahydrofolate + H2O = 2-dehydropantoate + (6S)-5,6,7,8-tetrahydrofolate. It participates in cofactor biosynthesis; (R)-pantothenate biosynthesis; (R)-pantoate from 3-methyl-2-oxobutanoate: step 1/2. Its function is as follows. Catalyzes the reversible reaction in which hydroxymethyl group from 5,10-methylenetetrahydrofolate is transferred onto alpha-ketoisovalerate to form ketopantoate. This chain is 3-methyl-2-oxobutanoate hydroxymethyltransferase, found in Xanthobacter autotrophicus (strain ATCC BAA-1158 / Py2).